The chain runs to 591 residues: L-fucose isomerase (591 aa).

Catalysis depends on proton acceptor residues Glu337 and Asp361. Glu337, Asp361, and His528 together coordinate Mn(2+).

The protein belongs to the L-fucose isomerase family. Homohexamer. Mn(2+) is required as a cofactor.

It is found in the cytoplasm. It catalyses the reaction L-fucose = L-fuculose. The protein operates within carbohydrate degradation; L-fucose degradation; L-lactaldehyde and glycerone phosphate from L-fucose: step 1/3. In terms of biological role, converts the aldose L-fucose into the corresponding ketose L-fuculose. This is L-fucose isomerase from Escherichia coli O139:H28 (strain E24377A / ETEC).